Consider the following 58-residue polypeptide: Large ribosomal subunit protein bL32 (58 aa).

Belongs to the bacterial ribosomal protein bL32 family.

The protein is Large ribosomal subunit protein bL32 of Anaplasma marginale (strain Florida).